A 973-amino-acid polypeptide reads, in one-letter code: Protein HypA (973 aa).

This chain is Protein HypA (hypA), found in Clostridium perfringens (strain 13 / Type A).